Consider the following 554-residue polypeptide: Arginine--tRNA ligase (554 aa).

The 'HIGH' region motif lies at 129-139 (ANPTGPLHIGH).

Belongs to the class-I aminoacyl-tRNA synthetase family. As to quaternary structure, monomer.

The protein localises to the cytoplasm. The enzyme catalyses tRNA(Arg) + L-arginine + ATP = L-arginyl-tRNA(Arg) + AMP + diphosphate. This chain is Arginine--tRNA ligase, found in Syntrophotalea carbinolica (strain DSM 2380 / NBRC 103641 / GraBd1) (Pelobacter carbinolicus).